Here is a 496-residue protein sequence, read N- to C-terminus: 4-O-methyl-glucuronoyl methylesterase 1 (496 aa).

Positions 1-19 are cleaved as a signal peptide; sequence MKSTVASALLVLAGTAVQA. Residues 20 to 55 form the CBM1 domain; the sequence is QSGPWQQCGGIGWQGPFTCVSGHTCQVLNDWYHQCV. The interval 57 to 151 is disordered; sequence GGGPSPPPTS…RLPDPFTFHN (95 aa). Positions 59 to 125 are enriched in pro residues; it reads GPSPPPTSPP…SPPPTSPPPS (67 aa). Intrachain disulfides connect Cys-129–Cys-163, Cys-307–Cys-443, and Cys-339–Cys-415. A GXSYXG catalytic site motif motif is present at residues 306–311; that stretch reads GCSRNG. Ser-308 acts as the Nucleophile in catalysis. Residues Lys-312, Gln-354, Glu-362, and Trp-406 each contribute to the substrate site. Residue His-442 is the Proton donor/acceptor of the active site.

Belongs to the carbohydrate esterase 15 (CE15) family.

It is found in the secreted. The enzyme catalyses a 4-O-methyl-alpha-D-glucuronosyl ester derivative + H2O = 4-O-methyl-alpha-D-glucuronate derivative + an alcohol + H(+). In terms of biological role, glucuronoyl esterase which may play a significant role in biomass degradation, as it is considered to disconnect hemicellulose from lignin through the hydrolysis of the ester bond between 4-O-methyl-D-glucuronic acid residues of glucuronoxylans and aromatic alcohols of lignin. Cleaves native lignin-carbohydrate (LC) ester bonds from LC complex preparations of spruce (softwood) and birch (hardwood), containing mainly hemicelluloses with partially acetylated glucomannans in spruce and partially acetylated xylan in birch. Can hydrolyze benzyl glucuronic acid (BnGlcA), allyl glucuronic acid (allylGlcA) and to a lower degree methyl glucuronic acid (MeGlcA) in vitro. In Sodiomyces alcalophilus (Acremonium alcalophilum), this protein is 4-O-methyl-glucuronoyl methylesterase 1.